The sequence spans 27 residues: Toxin Bcg III 21.00 (27 aa).

It is found in the secreted. The protein resides in the nematocyst. In terms of biological role, possible voltage-gated potassium channel (Kv) blocker. This is Toxin Bcg III 21.00 from Bunodosoma cangicum (Sea anemone).